Reading from the N-terminus, the 807-residue chain is Glycerol-3-phosphate acyltransferase (807 aa).

Positions 308–313 (CHRSHM) match the HXXXXD motif motif.

Belongs to the GPAT/DAPAT family.

The protein localises to the cell inner membrane. The catalysed reaction is sn-glycerol 3-phosphate + an acyl-CoA = a 1-acyl-sn-glycero-3-phosphate + CoA. Its pathway is phospholipid metabolism; CDP-diacylglycerol biosynthesis; CDP-diacylglycerol from sn-glycerol 3-phosphate: step 1/3. In Shewanella halifaxensis (strain HAW-EB4), this protein is Glycerol-3-phosphate acyltransferase.